Consider the following 185-residue polypeptide: Protein-arginine kinase activator protein (185 aa).

Phosphoarginine is present on residues Arg-115 and Arg-169. Residues 139-174 (RRQIDMLKKELESLIHQEEFENAAHVRDQIRLLEQS) enclose the UVR domain.

Interacts with McsB. Post-translationally, phosphorylated on Arg residues by McsB.

Functionally, activates the phosphorylation activity of the protein-arginine kinase McsB. Is required for the delocalization of competence proteins from the cell poles. This is Protein-arginine kinase activator protein (mcsA) from Bacillus subtilis (strain 168).